We begin with the raw amino-acid sequence, 87 residues long: DNA polymerase epsilon subunit C (87 aa).

In terms of assembly, DNA polymerase epsilon is a heterotetramer consisting of cdc20/Pol2, dpb2, dpb3, and dpb4. Also forms a heterodimer consisting dpb3 and dpb4. Interacts directly with cdc20/pol2 and dpb4.

The protein resides in the nucleus. As accessory component of the DNA polymerase epsilon (DNA polymerase II) participates in chromosomal DNA replication. It is required during synthesis of the leading and lagging DNA strands at the replication fork and binds at/or near replication origins and moves along DNA with the replication fork. It has 3'-5' proofreading exonuclease activity that correct errors arising during DNA replication. It is also involved in DNA synthesis during DNA repair. The dpb3-dpb4 dimer associates with histone deacetylases, chromatin remodelers, and histones and plays a crucial role in the inheritance of histone hypoacetylation and H3K9 methylation in heterochromatin. The dpb3-dpb4 dimer is also required for the recruitment of sir2 to heterochromatin. The polypeptide is DNA polymerase epsilon subunit C (Schizosaccharomyces pombe (strain 972 / ATCC 24843) (Fission yeast)).